A 144-amino-acid chain; its full sequence is Transcription antitermination protein NusB (144 aa).

It belongs to the NusB family.

Its function is as follows. Involved in transcription antitermination. Required for transcription of ribosomal RNA (rRNA) genes. Binds specifically to the boxA antiterminator sequence of the ribosomal RNA (rrn) operons. The polypeptide is Transcription antitermination protein NusB (Leifsonia xyli subsp. xyli (strain CTCB07)).